Here is a 62-residue protein sequence, read N- to C-terminus: Large ribosomal subunit protein bL28 (62 aa).

Belongs to the bacterial ribosomal protein bL28 family.

In Streptococcus mutans serotype c (strain ATCC 700610 / UA159), this protein is Large ribosomal subunit protein bL28.